We begin with the raw amino-acid sequence, 293 residues long: Probable endonuclease 4 (293 aa).

H78, H118, E154, D188, H191, H225, D238, H240, and E270 together coordinate Zn(2+).

Belongs to the AP endonuclease 2 family. Zn(2+) serves as cofactor.

It carries out the reaction Endonucleolytic cleavage to 5'-phosphooligonucleotide end-products.. Endonuclease IV plays a role in DNA repair. It cleaves phosphodiester bonds at apurinic or apyrimidinic (AP) sites, generating a 3'-hydroxyl group and a 5'-terminal sugar phosphate. This Vibrio vulnificus (strain CMCP6) protein is Probable endonuclease 4.